Reading from the N-terminus, the 257-residue chain is Leucine-rich repeat-containing protein 3 (257 aa).

A signal peptide spans 1–32; sequence MGPRGRQSPSSPLAPSQGSCFFILFCLRLGAS. An LRRNT domain is found at 33-64; the sequence is CPQSCQCPDHAGAVAVHCSSRGLQEIPRDIPA. LRR repeat units follow at residues 65 to 86, 89 to 110, and 114 to 135; these read NTVL…AFQH, QLRE…AFSG, and GLRL…ALGK. One can recognise an LRRCT domain in the interval 145 to 198; that stretch reads NPLHCECALQEALWELKLDPDSVDEIACHTSAQEQFVGKPLIQVLDSGASFCST. A helical membrane pass occupies residues 205–225; that stretch reads VAMLVTMFGWFTMVIAYVVYY.

The protein belongs to the LRRC3 family.

The protein localises to the membrane. The polypeptide is Leucine-rich repeat-containing protein 3 (Lrrc3) (Rattus norvegicus (Rat)).